We begin with the raw amino-acid sequence, 112 residues long: Abdominal ganglion neuropeptides L5-67 (112 aa).

A signal peptide spans 1-23; it reads MKTAVLLVCLAYVMAAILSLCAS. Phe-33 carries the phenylalanine amide modification.

Post-translationally, the prohormone is proteolytically cleaved in 2 steps, yielding first 2 products: luqin and PRMP. In the second step, PRMP is cleaved to yield luqin-B and luqin-C. In terms of tissue distribution, neurons L2-4 and L6, also called giant dorsal LUQ (Left Upper Quadrant) neurons of the abdominal ganglion. Also expressed in smaller neurons in the CNS and in peripheral organs such as the kidney.

It localises to the secreted. This is Abdominal ganglion neuropeptides L5-67 from Aplysia californica (California sea hare).